The following is a 414-amino-acid chain: GA-binding protein subunit beta-2 (414 aa).

ANK repeat units lie at residues aspartate 5–threonine 34, leucine 37–alanine 66, valine 70–alanine 99, leucine 103–alanine 132, and phenylalanine 136–threonine 166. The residue at position 218 (serine 218) is a Phosphoserine. Residues glutamate 310–asparagine 362 are a coiled coil.

Heterotetramer of two alpha and two beta subunits. The C-terminal is necessary for the formation of a heterotetrameric GABP-alpha-2/beta-2 complex, and also facilitates homotypic dimerization. Interacts with ADGRB2. High levels in thymus, spleen, kidney and intestine.

The protein localises to the nucleus. Functionally, transcription factor capable of interacting with purine rich repeats (GA repeats). Must associate with GABP-alpha to bind DNA. This Mus musculus (Mouse) protein is GA-binding protein subunit beta-2 (Gabpb2).